Reading from the N-terminus, the 136-residue chain is DNA-directed RNA polymerase subunit omega (136 aa).

Residues 90–102 (SSPAAAAVAPQSS) are compositionally biased toward low complexity. The segment at 90-136 (SSPAAAAVAPQSSSDDKDVQFDRMSEEDLLRGLENLAPPTETDDEGE) is disordered. The segment covering 103-120 (SDDKDVQFDRMSEEDLLR) has biased composition (basic and acidic residues).

Belongs to the RNA polymerase subunit omega family. As to quaternary structure, the RNAP catalytic core consists of 2 alpha, 1 beta, 1 beta' and 1 omega subunit. When a sigma factor is associated with the core the holoenzyme is formed, which can initiate transcription.

It catalyses the reaction RNA(n) + a ribonucleoside 5'-triphosphate = RNA(n+1) + diphosphate. In terms of biological role, promotes RNA polymerase assembly. Latches the N- and C-terminal regions of the beta' subunit thereby facilitating its interaction with the beta and alpha subunits. The protein is DNA-directed RNA polymerase subunit omega of Methylorubrum populi (strain ATCC BAA-705 / NCIMB 13946 / BJ001) (Methylobacterium populi).